Consider the following 334-residue polypeptide: UDP-N-acetylglucosamine--N-acetylmuramyl-(pentapeptide) pyrophosphoryl-undecaprenol N-acetylglucosamine transferase (334 aa).

UDP-N-acetyl-alpha-D-glucosamine contacts are provided by residues 11 to 13 (TGG), N125, S185, I229, and Q274.

This sequence belongs to the glycosyltransferase 28 family. MurG subfamily.

It localises to the cell inner membrane. The catalysed reaction is di-trans,octa-cis-undecaprenyl diphospho-N-acetyl-alpha-D-muramoyl-L-alanyl-D-glutamyl-meso-2,6-diaminopimeloyl-D-alanyl-D-alanine + UDP-N-acetyl-alpha-D-glucosamine = di-trans,octa-cis-undecaprenyl diphospho-[N-acetyl-alpha-D-glucosaminyl-(1-&gt;4)]-N-acetyl-alpha-D-muramoyl-L-alanyl-D-glutamyl-meso-2,6-diaminopimeloyl-D-alanyl-D-alanine + UDP + H(+). The protein operates within cell wall biogenesis; peptidoglycan biosynthesis. Its function is as follows. Cell wall formation. Catalyzes the transfer of a GlcNAc subunit on undecaprenyl-pyrophosphoryl-MurNAc-pentapeptide (lipid intermediate I) to form undecaprenyl-pyrophosphoryl-MurNAc-(pentapeptide)GlcNAc (lipid intermediate II). The polypeptide is UDP-N-acetylglucosamine--N-acetylmuramyl-(pentapeptide) pyrophosphoryl-undecaprenol N-acetylglucosamine transferase (Thermosipho africanus (strain TCF52B)).